Here is a 95-residue protein sequence, read N- to C-terminus: Small ribosomal subunit protein bS20 (95 aa).

The protein belongs to the bacterial ribosomal protein bS20 family.

In terms of biological role, binds directly to 16S ribosomal RNA. The sequence is that of Small ribosomal subunit protein bS20 from Ehrlichia canis (strain Jake).